Consider the following 133-residue polypeptide: Small ribosomal subunit protein uS8 (133 aa).

Belongs to the universal ribosomal protein uS8 family. Part of the 30S ribosomal subunit. Contacts proteins S5 and S12.

Its function is as follows. One of the primary rRNA binding proteins, it binds directly to 16S rRNA central domain where it helps coordinate assembly of the platform of the 30S subunit. In Chlamydia caviae (strain ATCC VR-813 / DSM 19441 / 03DC25 / GPIC) (Chlamydophila caviae), this protein is Small ribosomal subunit protein uS8.